The chain runs to 291 residues: tRNA-uridine aminocarboxypropyltransferase 1 (291 aa).

The disordered stretch occupies residues 158 to 181 (KNSAYEPSSKRPKFSPENDKNTYE). Residues 171–181 (FSPENDKNTYE) show a composition bias toward basic and acidic residues. Residues 199–202 (DSTW) carry the DXTW motif.

The protein belongs to the TDD superfamily. DTWD1 family.

The protein localises to the nucleus. It carries out the reaction a uridine in tRNA + S-adenosyl-L-methionine = a 3-[(3S)-3-amino-3-carboxypropyl]uridine in tRNA + S-methyl-5'-thioadenosine + H(+). Functionally, catalyzes the formation of 3-(3-amino-3-carboxypropyl)uridine (acp3U) at position 20 in the D-loop of several cytoplasmic tRNAs (acp3U(20)). The chain is tRNA-uridine aminocarboxypropyltransferase 1 from Xenopus laevis (African clawed frog).